An 890-amino-acid polypeptide reads, in one-letter code: MSQPFRSADIRQAFIDFFISKQHTPVASSSLIPHNDPTLLFTNAGMNQFKETFLGMEPRDYTRAVTSQKCVRAGGKHNDLDNVGYTARHHTFFEMLGNFSFGDYFKQAGIGYIWEFLTSDEWLAIDKNRLYVTIYETDDEAFDIWHKDIGIPSERIIRIGDNKGAPYASDNFWTMGDTGPCGPCTEVFYDHGADIEGGLPGTPEEDGDRYIEIWNCVFMQFNRQKDGSMLPLPAPSVDTGMGLERISAIMQGVHGNYEIDLFVHLMDAAAEILEIENQQQSSLKVIADHIRAVSFLIADGVTPSNEGRGYVLRRIIRRAVRHGNKLGADSEFFYKMVAPLVAEMGTAYPELKDKQSVIENAIQKEETQFAKTLAQGLRLLASELEGLKDGDTLSGEAAFKLYDTYGFPVDLTADITRERGIVIDEAEFDEHMQAQRERARDAGKFDVDYSSVIQVENPTTFIGYEQLEEEGVTIDALYQDGNPADSLTEGMEGVIVLDRTPFYAEGGGQVGELGEIRTASGVFEVQDTKKSGQAIIHYGVVTMGDISTKQTADAQVLSSIRAASAKNHSATHLLHAALREVLGDAVTQKGSLVSSEVLRFDFSYDKPVSTAEITRIERLVNEQIQANTPARIENMSIDEAMKQGAMALFGEKYGSDVRVLTMGTGSIIDGQRKPFSIELCGGLHVKRTGDIGVLKITSESGIAAGIRRIEAVTGMNAIKNIQQSEQQLSELASQLKVKRPEVAQRVRTMADKQRELEKQLERLEQKIASAQAANLLDDVQTIAGTPVLISTLSGIDGKSIRTLMDDIKSKLPDSVIVLIGDKDEQLALAASVAKSVTAKVKAGDIIRHLASELGGKGGGKPDYAQGGAPKAANTNAVVNALPAWIADQLG.

Residues His-568, His-572, Cys-680, and His-684 each contribute to the Zn(2+) site.

It belongs to the class-II aminoacyl-tRNA synthetase family. Zn(2+) is required as a cofactor.

It localises to the cytoplasm. It carries out the reaction tRNA(Ala) + L-alanine + ATP = L-alanyl-tRNA(Ala) + AMP + diphosphate. Functionally, catalyzes the attachment of alanine to tRNA(Ala) in a two-step reaction: alanine is first activated by ATP to form Ala-AMP and then transferred to the acceptor end of tRNA(Ala). Also edits incorrectly charged Ser-tRNA(Ala) and Gly-tRNA(Ala) via its editing domain. The sequence is that of Alanine--tRNA ligase from Psychrobacter cryohalolentis (strain ATCC BAA-1226 / DSM 17306 / VKM B-2378 / K5).